A 306-amino-acid polypeptide reads, in one-letter code: Putative S-adenosyl-L-methionine-dependent methyltransferase MAV_4442 (306 aa).

S-adenosyl-L-methionine-binding positions include D129 and 158-159 (DL).

The protein belongs to the UPF0677 family.

Functionally, exhibits S-adenosyl-L-methionine-dependent methyltransferase activity. The chain is Putative S-adenosyl-L-methionine-dependent methyltransferase MAV_4442 from Mycobacterium avium (strain 104).